We begin with the raw amino-acid sequence, 126 residues long: Fluoride-specific ion channel FluC (126 aa).

The next 4 helical transmembrane spans lie at 4-24 (YLYI…VSGV), 35-55 (IGTF…TGLF), 67-87 (LLIL…MFES), and 100-120 (ALNI…GLAL). Residues glycine 75 and threonine 78 each coordinate Na(+).

Belongs to the fluoride channel Fluc/FEX (TC 1.A.43) family.

The protein localises to the cell inner membrane. It carries out the reaction fluoride(in) = fluoride(out). Na(+) is not transported, but it plays an essential structural role and its presence is essential for fluoride channel function. In terms of biological role, fluoride-specific ion channel. Important for reducing fluoride concentration in the cell, thus reducing its toxicity. The polypeptide is Fluoride-specific ion channel FluC (Maridesulfovibrio salexigens (strain ATCC 14822 / DSM 2638 / NCIMB 8403 / VKM B-1763) (Desulfovibrio salexigens)).